A 776-amino-acid polypeptide reads, in one-letter code: Lysyl oxidase homolog 2 (776 aa).

The signal sequence occupies residues 1–25 (MEIPFGSCLYSCLALLVLLPSLSLA). SRCR domains are found at residues 61–162 (VRLA…VVCS), 191–305 (IRPI…VSCV), 329–428 (VRLR…VRCN), and 438–546 (VRLN…VACS). 9 cysteine pairs are disulfide-bonded: Cys-87–Cys-151, Cys-100–Cys-161, Cys-131–Cys-141, Cys-221–Cys-294, Cys-234–Cys-304, Cys-268–Cys-278, Cys-354–Cys-417, Cys-367–Cys-427, and Cys-398–Cys-408. N-linked (GlcNAc...) asparagine glycosylation is present at Asn-267. Asn-291 is a glycosylation site (N-linked (GlcNAc...) asparagine). Residue Asn-458 is glycosylated (N-linked (GlcNAc...) asparagine). Cystine bridges form between Cys-467-Cys-532, Cys-480-Cys-545, and Cys-514-Cys-524. The tract at residues 550-753 (PDLVLNAEIV…WMYNCHVGGA (204 aa)) is lysyl-oxidase like. Asp-551 and Leu-552 together coordinate Ca(2+). Cystine bridges form between Cys-575–Cys-627, Cys-581–Cys-697, Cys-659–Cys-675, and Cys-665–Cys-687. Cu cation-binding residues include His-628, His-630, and His-632. Residue Asn-646 is glycosylated (N-linked (GlcNAc...) asparagine). Positions 655–691 (KASFCLEDTECEGDIQKSYECANFGEQGITMGCWDMY) form a cross-link, lysine tyrosylquinone (Lys-Tyr). 2',4',5'-topaquinone is present on Tyr-691. The Ca(2+) site is built by Glu-724, Asp-726, Asn-729, and Asn-730. A disulfide bond links Cys-734 and Cys-748.

It belongs to the lysyl oxidase family. Component of some chromatin repressor complex. Interacts with SNAI1. Interacts with TAF10. Interacts with HSPA5. Interacts with EFEMP2. It depends on Cu cation as a cofactor. Lysine tyrosylquinone residue serves as cofactor. Post-translationally, the lysine tyrosylquinone cross-link (LTQ) is generated by condensation of the epsilon-amino group of a lysine with a topaquinone produced by oxidation of tyrosine. N-glycosylated. N-glycosylation on Asn-458 and Asn-646 may be essential for proper folding and secretion; may be composed of a fucosylated carbohydrates attached to a trimannose N-linked glycan core.

The protein localises to the secreted. It is found in the extracellular space. Its subcellular location is the extracellular matrix. It localises to the basement membrane. The protein resides in the nucleus. The protein localises to the chromosome. It is found in the endoplasmic reticulum. It catalyses the reaction L-lysyl-[protein] + O2 + H2O = (S)-2-amino-6-oxohexanoyl-[protein] + H2O2 + NH4(+). With respect to regulation, specifically inhibited by a mouse monoclonal antibody AB0023, inhibition occurs in a non-competitive manner. In terms of biological role, mediates the post-translational oxidative deamination of lysine residues on target proteins leading to the formation of deaminated lysine (allysine). Acts as a transcription corepressor and specifically mediates deamination of trimethylated 'Lys-4' of histone H3 (H3K4me3), a specific tag for epigenetic transcriptional activation. Shows no activity against histone H3 when it is trimethylated on 'Lys-9' (H3K9me3) or 'Lys-27' (H3K27me3) or when 'Lys-4' is monomethylated (H3K4me1) or dimethylated (H3K4me2). Also mediates deamination of methylated TAF10, a member of the transcription factor IID (TFIID) complex, which induces release of TAF10 from promoters, leading to inhibition of TFIID-dependent transcription. LOXL2-mediated deamination of TAF10 results in transcriptional repression of genes required for embryonic stem cell pluripotency including POU5F1/OCT4, NANOG, KLF4 and SOX2. Involved in epithelial to mesenchymal transition (EMT) via interaction with SNAI1 and participates in repression of E-cadherin CDH1, probably by mediating deamination of histone H3. During EMT, involved with SNAI1 in negatively regulating pericentromeric heterochromatin transcription. SNAI1 recruits LOXL2 to pericentromeric regions to oxidize histone H3 and repress transcription which leads to release of heterochromatin component CBX5/HP1A, enabling chromatin reorganization and acquisition of mesenchymal traits. Interacts with the endoplasmic reticulum protein HSPA5 which activates the IRE1-XBP1 pathway of the unfolded protein response, leading to expression of several transcription factors involved in EMT and subsequent EMT induction. When secreted into the extracellular matrix, promotes cross-linking of extracellular matrix proteins by mediating oxidative deamination of peptidyl lysine residues in precursors to fibrous collagen and elastin. Acts as a regulator of sprouting angiogenesis, probably via collagen IV scaffolding. Acts as a regulator of chondrocyte differentiation, probably by regulating expression of factors that control chondrocyte differentiation. The chain is Lysyl oxidase homolog 2 (Loxl2) from Rattus norvegicus (Rat).